We begin with the raw amino-acid sequence, 395 residues long: Allantoicase (395 aa).

Belongs to the allantoicase family.

It catalyses the reaction allantoate + H2O = (S)-ureidoglycolate + urea. Its pathway is nitrogen metabolism; (S)-allantoin degradation; (S)-ureidoglycolate from allantoate (aminidohydrolase route): step 1/1. Functionally, utilization of purines as secondary nitrogen sources, when primary sources are limiting. This is Allantoicase (allc) from Danio rerio (Zebrafish).